The primary structure comprises 941 residues: Pre-mRNA-processing factor 6 (941 aa).

A disordered region spans residues 1-79; sequence MNKKKKPFLG…DEDLNDTNYD (79 aa). Basic and acidic residues predominate over residues 39-65; it reads DANDPVDDRHAPPGKRTVGDQMKKNQA. Residues 66–78 are compositionally biased toward acidic residues; sequence ADDDDEDLNDTNY. Phosphoserine is present on serine 143. Phosphothreonine occurs at positions 180, 266, and 275. Serine 279 carries the phosphoserine modification. HAT repeat units follow at residues 384 to 416, 418 to 444, 445 to 476, 554 to 586, 588 to 620, 622 to 654, 689 to 721, 723 to 755, and 855 to 887; these read TDIR…LEEP, DARI…ARLE, TYEN…LEEA, NALE…FEKN, GTRE…SKWL, GDVP…LESE, GNIT…IEEQ, ELME…LEEK, and RKIT…FELQ.

In terms of assembly, identified in the spliceosome B complex. Identified in the spliceosome C complex. Associates with the U5 snRNP particle. Component of the U4/U6-U5 tri-snRNP complex composed of the U4, U6 and U5 snRNAs and at least PRPF3, PRPF4, PRPF6, PRPF8, PRPF31, SNRNP200, TXNL4A, SNRNP40, DDX23, CD2BP2, PPIH, SNU13, EFTUD2, SART1 and USP39, LSm proteins LSm2-8 and Sm proteins. Interacts with ARAF1. Interacts with AR and NR3C1, but not ESR1, independently of the presence of hormones. Interacts with USH1G. Phosphorylated by PRP4K during spliceosome assembly.

The protein localises to the nucleus. It is found in the nucleoplasm. Its subcellular location is the nucleus speckle. Functionally, involved in pre-mRNA splicing as component of the U4/U6-U5 tri-snRNP complex, one of the building blocks of the spliceosome. Enhances dihydrotestosterone-induced transactivation activity of AR, as well as dexamethasone-induced transactivation activity of NR3C1, but does not affect estrogen-induced transactivation. In Rattus norvegicus (Rat), this protein is Pre-mRNA-processing factor 6 (Prpf6).